Consider the following 285-residue polypeptide: Gap junction Cx32.2 protein (285 aa).

The Cytoplasmic segment spans residues 2–19 (GDLGFLSKLLDQVQSHST). Residues 20–40 (VIGKIWMTVLFLFRIMVLGAG) form a helical membrane-spanning segment. At 41–76 (AESVWGDEQSDFTCNTQQPGCENVCYDWTFPISHIR) the chain is on the extracellular side. Residues 77–99 (FWVLQIIFVSTPTLIYLGHAMHI) form a helical membrane-spanning segment. Over 100–148 (IQQETKLRARLSSPGGSRLCKQPKYTNEQGKVKIKGNLLGSYLTQLVFK) the chain is Cytoplasmic. A helical membrane pass occupies residues 149 to 171 (IIIEAAFIVGQYYLYGFIMVPMF). Over 172–194 (PCSKKPCPFTVECYMSRPTEKTI) the chain is Extracellular. A helical transmembrane segment spans residues 195-217 (FIIFMLVVACVSLLLNVIEVFYL). The Cytoplasmic segment spans residues 218–285 (ICTRVRCGSR…AKEEKRLLSH (68 aa)). Residues 264 to 285 (ETSQSIGGSLDGAKEEKRLLSH) are disordered. Residues 275–285 (GAKEEKRLLSH) are compositionally biased toward basic and acidic residues.

This sequence belongs to the connexin family. Beta-type (group I) subfamily. A connexon is composed of a hexamer of connexins.

The protein resides in the cell membrane. Its subcellular location is the cell junction. It is found in the gap junction. One gap junction consists of a cluster of closely packed pairs of transmembrane channels, the connexons, through which materials of low MW diffuse from one cell to a neighboring cell. May be involved in ovarian follicular maturation. This chain is Gap junction Cx32.2 protein, found in Micropogonias undulatus (Atlantic croaker).